The primary structure comprises 236 residues: tRNA (guanine-N(1)-)-methyltransferase (236 aa).

S-adenosyl-L-methionine contacts are provided by residues G110 and 129 to 134; that span reads LGDFVL.

Belongs to the RNA methyltransferase TrmD family. Homodimer.

The protein localises to the cytoplasm. It carries out the reaction guanosine(37) in tRNA + S-adenosyl-L-methionine = N(1)-methylguanosine(37) in tRNA + S-adenosyl-L-homocysteine + H(+). Specifically methylates guanosine-37 in various tRNAs. In Clostridium perfringens (strain ATCC 13124 / DSM 756 / JCM 1290 / NCIMB 6125 / NCTC 8237 / Type A), this protein is tRNA (guanine-N(1)-)-methyltransferase.